Reading from the N-terminus, the 177-residue chain is ATP synthase subunit delta (177 aa).

It belongs to the ATPase delta chain family. As to quaternary structure, F-type ATPases have 2 components, F(1) - the catalytic core - and F(0) - the membrane proton channel. F(1) has five subunits: alpha(3), beta(3), gamma(1), delta(1), epsilon(1). F(0) has three main subunits: a(1), b(2) and c(10-14). The alpha and beta chains form an alternating ring which encloses part of the gamma chain. F(1) is attached to F(0) by a central stalk formed by the gamma and epsilon chains, while a peripheral stalk is formed by the delta and b chains.

The protein localises to the cell inner membrane. Its function is as follows. F(1)F(0) ATP synthase produces ATP from ADP in the presence of a proton or sodium gradient. F-type ATPases consist of two structural domains, F(1) containing the extramembraneous catalytic core and F(0) containing the membrane proton channel, linked together by a central stalk and a peripheral stalk. During catalysis, ATP synthesis in the catalytic domain of F(1) is coupled via a rotary mechanism of the central stalk subunits to proton translocation. In terms of biological role, this protein is part of the stalk that links CF(0) to CF(1). It either transmits conformational changes from CF(0) to CF(1) or is implicated in proton conduction. This Neisseria gonorrhoeae (strain ATCC 700825 / FA 1090) protein is ATP synthase subunit delta.